The chain runs to 850 residues: Bifunctional uridylyltransferase/uridylyl-removing enzyme (850 aa).

The interval 1–317 is uridylyltransferase; sequence MSARPFADLR…LFPVVAPPLP (317 aa). The tract at residues 318–673 is uridylyl-removing; sequence IDDDFQLRAG…ARLSPAGEGI (356 aa). In terms of domain architecture, HD spans 436 to 558; sequence VDEHILTVLR…VGDTRRLDAL (123 aa). ACT domains are found at residues 674–755 and 783–850; these read QVMV…AVQP and VLSI…GVLG.

It belongs to the GlnD family. It depends on Mg(2+) as a cofactor.

The enzyme catalyses [protein-PII]-L-tyrosine + UTP = [protein-PII]-uridylyl-L-tyrosine + diphosphate. The catalysed reaction is [protein-PII]-uridylyl-L-tyrosine + H2O = [protein-PII]-L-tyrosine + UMP + H(+). Uridylyltransferase (UTase) activity is inhibited by glutamine, while glutamine activates uridylyl-removing (UR) activity. In terms of biological role, modifies, by uridylylation and deuridylylation, the PII regulatory proteins (GlnB and homologs), in response to the nitrogen status of the cell that GlnD senses through the glutamine level. Under low glutamine levels, catalyzes the conversion of the PII proteins and UTP to PII-UMP and PPi, while under higher glutamine levels, GlnD hydrolyzes PII-UMP to PII and UMP (deuridylylation). Thus, controls uridylylation state and activity of the PII proteins, and plays an important role in the regulation of nitrogen assimilation and metabolism. This is Bifunctional uridylyltransferase/uridylyl-removing enzyme from Thiobacillus denitrificans (strain ATCC 25259 / T1).